We begin with the raw amino-acid sequence, 620 residues long: Chaperone protein HscA homolog (620 aa).

It belongs to the heat shock protein 70 family.

Its function is as follows. Chaperone involved in the maturation of iron-sulfur cluster-containing proteins. Has a low intrinsic ATPase activity which is markedly stimulated by HscB. In Pseudomonas putida (strain ATCC 47054 / DSM 6125 / CFBP 8728 / NCIMB 11950 / KT2440), this protein is Chaperone protein HscA homolog.